Here is a 1120-residue protein sequence, read N- to C-terminus: ELKS/Rab6-interacting/CAST family member 1 (1120 aa).

The tract at residues 1–54 (MYGSARSVGKVEPSSQSPGRSPRLPRSPRLGHRRTNSTGGSSGNSVGGGSGKTL) is disordered. Lysine 10 carries the N6-acetyllysine modification. The segment covering 13 to 28 (PSSQSPGRSPRLPRSP) has biased composition (low complexity). Phosphoserine is present on residues serine 17, serine 21, and serine 37. Threonine 38 bears the Phosphothreonine mark. Residues 40 to 51 (GSSGNSVGGGSG) are compositionally biased toward gly residues. Phosphoserine is present on residues serine 55, serine 75, serine 94, serine 824, leucine 965, and serine 1009. The stretch at 144-992 (RQARDNTIMD…RMKLMADNYE (849 aa)) forms a coiled coil. Over residues 801-824 (KHKEQVEKKKSAQMLEEARRREDS) the composition is skewed to basic and acidic residues. The interval 801-840 (KHKEQVEKKKSAQMLEEARRREDSLSDSSQQLQDSLRKKD) is disordered. Phosphothreonine is present on threonine 1050. The FIP-RBD domain maps to 1050-1112 (TPPASYNADG…DHCPDILEQV (63 aa)). The stretch at 1060–1104 (EQAAWENELQQMTQEQLQNELEKVEGDNAELQEFANTILQQIADH) forms a coiled coil.

As to quaternary structure, interacts with the GTB-bound forms of RAB6A isoform 1 and isoform 2 and with RAB6B. The interaction was strongest with RAB6B, followed by RAB6A isoform 2 and weakest with RAB6A isoform 1. Part of a complex with CHUK, IKBKB and IKBKG. Interacts with CHUK, IKBKB and IKBKG. The interaction with IKBKG is independent of CHUK and IKBKB. Interacts with NFKBIA. Isoform 2 interacts through its C-terminus with the PDZ domains of RIMS1 and RIMS2. Interacts with ERC2/CAST1. Interacts with SDCCAG8. Part of a cortical microtubule stabilization complex (CMSC) composed of KANK1, PPFIA1, PPFIBP1, ERC1/ELKS, PHLDB2/LL5beta, CLASPs, KIF21A and possibly additional interactors; within CMSCs KANK1 and PHLDB2/LL5beta appear to be the core components for targeting of microtubule-binding proteins KIF21A and CLASPs, whereas PPFIA1, PPFIBP1 and ERC1/ELKS serve as scaffolds for protein clustering. In terms of tissue distribution, widely expressed.

It is found in the cytoplasm. The protein localises to the cytoskeleton. Its subcellular location is the microtubule organizing center. It localises to the centrosome. The protein resides in the membrane. It is found in the golgi apparatus membrane. The protein localises to the presynaptic active zone. Its subcellular location is the cell projection. It localises to the podosome. Regulatory subunit of the IKK complex. Probably recruits IkappaBalpha/NFKBIA to the complex. May be involved in the organization of the cytomatrix at the nerve terminals active zone (CAZ) which regulates neurotransmitter release. May be involved in vesicle trafficking at the CAZ. May be involved in Rab-6 regulated endosomes to Golgi transport. In Mus musculus (Mouse), this protein is ELKS/Rab6-interacting/CAST family member 1.